Consider the following 241-residue polypeptide: Probable phosphatase Cthe_0111 (241 aa).

Histidine 8, histidine 10, histidine 16, histidine 41, glutamate 74, histidine 102, histidine 132, aspartate 192, and histidine 194 together coordinate Zn(2+).

This sequence belongs to the PHP family. The cofactor is Zn(2+).

The sequence is that of Probable phosphatase Cthe_0111 from Acetivibrio thermocellus (strain ATCC 27405 / DSM 1237 / JCM 9322 / NBRC 103400 / NCIMB 10682 / NRRL B-4536 / VPI 7372) (Clostridium thermocellum).